A 962-amino-acid polypeptide reads, in one-letter code: CRACD-like protein (962 aa).

3 disordered regions span residues 38-102 (GKKK…PESG), 131-174 (NVKM…HDVG), and 212-871 (PAES…QEPV). A compositionally biased stretch (polar residues) spans 46-61 (PSSTGSSTWKQSQTRN). Residue Ser92 is modified to Phosphoserine. Residues 224-244 (AKHKLQVKPRNQRSSKMRRLS) are compositionally biased toward basic residues. Residues 245–256 (SRAQSESLSDLT) show a composition bias toward polar residues. A compositionally biased stretch (basic and acidic residues) spans 266–278 (EKPLLEVSPEERP). Pro residues-rich tracts occupy residues 292-303 (EPGPPAPLPPPG) and 354-365 (PPSPPEGPPNPG). Over residues 407–425 (PEGDTTPPETDPAATSEAP) the composition is skewed to low complexity. Basic and acidic residues-rich tracts occupy residues 429–440 (DGPERSVPKEAE) and 459–480 (EPER…ERIG). Position 490 is a phosphoserine (Ser490). The segment covering 503–521 (AAASEGPAASPPLAAAESP) has biased composition (low complexity). 4 stretches are compositionally biased toward basic and acidic residues: residues 536-546 (APERPKAERAE), 555-570 (AAPE…ELRG), 631-642 (KLAERGPQDSGD), and 709-728 (YSAE…EEKC). The segment covering 753–764 (PEPLSSKPPLPR) has biased composition (pro residues). Composition is skewed to basic and acidic residues over residues 784 to 806 (PGER…RGAE) and 844 to 869 (QEDK…RGQE).

This chain is CRACD-like protein, found in Homo sapiens (Human).